Consider the following 299-residue polypeptide: CMRF35-like molecule 8 (299 aa).

The N-terminal stretch at 1–17 is a signal peptide; sequence MWLPWALLLLWVPGCFA. The Extracellular portion of the chain corresponds to 18 to 180; the sequence is LSKCRTVAGP…TEEVVNSQLP (163 aa). Residues 19–123 enclose the Ig-like V-type domain; it reads SKCRTVAGPV…HDPVVEVEVS (105 aa). Cysteine 36 and cysteine 103 form a disulfide bridge. 2 N-linked (GlcNAc...) asparagine glycosylation sites follow: asparagine 83 and asparagine 92. Residues 181–201 traverse the membrane as a helical segment; that stretch reads LLLSLLALLLLLLVGASLLAW. Residues 202–299 are Cytoplasmic-facing; it reads RMFQKWIKAG…DSDYSVIRKT (98 aa). The interval 278 to 299 is disordered; the sequence is RIAAQRPREEEPDSDYSVIRKT. Phosphotyrosine is present on tyrosine 293.

It belongs to the CD300 family. In terms of assembly, upon tyrosine-phosphorylation, interacts with PTN6/SHP-1 and PTPN11/SHP-2 and INPP5D. Phosphorylated on tyrosine. In terms of processing, N-glycosylated. As to expression, expressed not only by natural killer (NK) cells but also by T-cell subsets, B-cells, dendritic cells, mast cells, granulocytes and monocytes.

It localises to the cell membrane. Functionally, inhibitory receptor which may contribute to the down-regulation of cytolytic activity in natural killer (NK) cells, and to the down-regulation of mast cell degranulation. Negatively regulates the Toll-like receptor (TLR) signaling mediated by MYD88 but not TRIF through activation of PTPN6. The polypeptide is CMRF35-like molecule 8 (CD300A) (Homo sapiens (Human)).